The chain runs to 133 residues: ATP synthase epsilon chain (133 aa).

This sequence belongs to the ATPase epsilon chain family. As to quaternary structure, F-type ATPases have 2 components, CF(1) - the catalytic core - and CF(0) - the membrane proton channel. CF(1) has five subunits: alpha(3), beta(3), gamma(1), delta(1), epsilon(1). CF(0) has three main subunits: a, b and c.

It is found in the cell inner membrane. Functionally, produces ATP from ADP in the presence of a proton gradient across the membrane. The chain is ATP synthase epsilon chain from Paramagnetospirillum magneticum (strain ATCC 700264 / AMB-1) (Magnetospirillum magneticum).